Here is a 178-residue protein sequence, read N- to C-terminus: Crossover junction endodeoxyribonuclease RuvC (178 aa).

Catalysis depends on residues D20, E80, and D154. Positions 20, 80, and 154 each coordinate Mg(2+).

Belongs to the RuvC family. Homodimer which binds Holliday junction (HJ) DNA. The HJ becomes 2-fold symmetrical on binding to RuvC with unstacked arms; it has a different conformation from HJ DNA in complex with RuvA. In the full resolvosome a probable DNA-RuvA(4)-RuvB(12)-RuvC(2) complex forms which resolves the HJ. It depends on Mg(2+) as a cofactor.

The protein resides in the cytoplasm. The catalysed reaction is Endonucleolytic cleavage at a junction such as a reciprocal single-stranded crossover between two homologous DNA duplexes (Holliday junction).. Functionally, the RuvA-RuvB-RuvC complex processes Holliday junction (HJ) DNA during genetic recombination and DNA repair. Endonuclease that resolves HJ intermediates. Cleaves cruciform DNA by making single-stranded nicks across the HJ at symmetrical positions within the homologous arms, yielding a 5'-phosphate and a 3'-hydroxyl group; requires a central core of homology in the junction. The consensus cleavage sequence is 5'-(A/T)TT(C/G)-3'. Cleavage occurs on the 3'-side of the TT dinucleotide at the point of strand exchange. HJ branch migration catalyzed by RuvA-RuvB allows RuvC to scan DNA until it finds its consensus sequence, where it cleaves and resolves the cruciform DNA. The sequence is that of Crossover junction endodeoxyribonuclease RuvC from Rhodopirellula baltica (strain DSM 10527 / NCIMB 13988 / SH1).